The following is a 132-amino-acid chain: Phosphoribosyl-AMP cyclohydrolase (132 aa).

Position 82 (Asp-82) interacts with Mg(2+). Residue Cys-83 coordinates Zn(2+). 2 residues coordinate Mg(2+): Asp-84 and Asp-86. The Zn(2+) site is built by Cys-99 and Cys-106.

Belongs to the PRA-CH family. In terms of assembly, homodimer. Requires Mg(2+) as cofactor. It depends on Zn(2+) as a cofactor.

It localises to the cytoplasm. It catalyses the reaction 1-(5-phospho-beta-D-ribosyl)-5'-AMP + H2O = 1-(5-phospho-beta-D-ribosyl)-5-[(5-phospho-beta-D-ribosylamino)methylideneamino]imidazole-4-carboxamide. Its pathway is amino-acid biosynthesis; L-histidine biosynthesis; L-histidine from 5-phospho-alpha-D-ribose 1-diphosphate: step 3/9. Catalyzes the hydrolysis of the adenine ring of phosphoribosyl-AMP. This Paramagnetospirillum magneticum (strain ATCC 700264 / AMB-1) (Magnetospirillum magneticum) protein is Phosphoribosyl-AMP cyclohydrolase.